The primary structure comprises 94 residues: Co-chaperonin GroES (94 aa).

This sequence belongs to the GroES chaperonin family. Heptamer of 7 subunits arranged in a ring. Interacts with the chaperonin GroEL.

The protein resides in the cytoplasm. Functionally, together with the chaperonin GroEL, plays an essential role in assisting protein folding. The GroEL-GroES system forms a nano-cage that allows encapsulation of the non-native substrate proteins and provides a physical environment optimized to promote and accelerate protein folding. GroES binds to the apical surface of the GroEL ring, thereby capping the opening of the GroEL channel. In Geobacillus thermodenitrificans (strain NG80-2), this protein is Co-chaperonin GroES.